Consider the following 242-residue polypeptide: MILLISDLHLEEKRPDITRAFLHFLATRARQAEALYILGDFFEVWIGDDGMTPFQHEIAGALRELSDSGTRIYLMHGNRDFLIGKRFCREAGCTLLGDPHRVQMNGEPVLLMHGDSLCTLDVGYMKLRRWLRNPLSLLILRNLPLATRQKLARKLRNESRAQTRMKASEIVDVTPEEVVRVMGEYDVRTLIHGHTHRPAVHELEVNGQPARRIVLGDWDRQGWALQVDGEGFNQAPFELTPA.

D7, H9, D40, N78, and H113 together coordinate Mn(2+). 78-79 contributes to the substrate binding site; the sequence is NR. Substrate contacts are provided by D121, S159, T163, K166, and H194. The Mn(2+) site is built by H194 and H196.

This sequence belongs to the LpxH family. Requires Mn(2+) as cofactor.

The protein localises to the cell inner membrane. The catalysed reaction is UDP-2-N,3-O-bis[(3R)-3-hydroxytetradecanoyl]-alpha-D-glucosamine + H2O = 2-N,3-O-bis[(3R)-3-hydroxytetradecanoyl]-alpha-D-glucosaminyl 1-phosphate + UMP + 2 H(+). The protein operates within glycolipid biosynthesis; lipid IV(A) biosynthesis; lipid IV(A) from (3R)-3-hydroxytetradecanoyl-[acyl-carrier-protein] and UDP-N-acetyl-alpha-D-glucosamine: step 4/6. Its function is as follows. Hydrolyzes the pyrophosphate bond of UDP-2,3-diacylglucosamine to yield 2,3-diacylglucosamine 1-phosphate (lipid X) and UMP by catalyzing the attack of water at the alpha-P atom. Involved in the biosynthesis of lipid A, a phosphorylated glycolipid that anchors the lipopolysaccharide to the outer membrane of the cell. The chain is UDP-2,3-diacylglucosamine hydrolase from Ectopseudomonas mendocina (strain ymp) (Pseudomonas mendocina).